Consider the following 276-residue polypeptide: Large ribosomal subunit protein uL2 (276 aa).

Residues 223–276 (AVMNPVDHPHGGGEGKNSVGRKSPLTPWGKPALGIKTRGRKTSDKFIVRRRNEK) are disordered. Residues 263–276 (KTSDKFIVRRRNEK) are compositionally biased toward basic and acidic residues.

The protein belongs to the universal ribosomal protein uL2 family. Part of the 50S ribosomal subunit. Forms a bridge to the 30S subunit in the 70S ribosome.

Its function is as follows. One of the primary rRNA binding proteins. Required for association of the 30S and 50S subunits to form the 70S ribosome, for tRNA binding and peptide bond formation. It has been suggested to have peptidyltransferase activity; this is somewhat controversial. Makes several contacts with the 16S rRNA in the 70S ribosome. The polypeptide is Large ribosomal subunit protein uL2 (Fusobacterium nucleatum subsp. nucleatum (strain ATCC 25586 / DSM 15643 / BCRC 10681 / CIP 101130 / JCM 8532 / KCTC 2640 / LMG 13131 / VPI 4355)).